An 855-amino-acid chain; its full sequence is Valine--tRNA ligase (855 aa).

The short motif at 42–52 (PTISGKLHIGH) is the 'HIGH' region element. Residues 574 to 578 (KMSKS) carry the 'KMSKS' region motif. Lysine 577 provides a ligand contact to ATP.

Belongs to the class-I aminoacyl-tRNA synthetase family. ValS type 2 subfamily. In terms of assembly, monomer.

It is found in the cytoplasm. It carries out the reaction tRNA(Val) + L-valine + ATP = L-valyl-tRNA(Val) + AMP + diphosphate. Catalyzes the attachment of valine to tRNA(Val). As ValRS can inadvertently accommodate and process structurally similar amino acids such as threonine, to avoid such errors, it has a 'posttransfer' editing activity that hydrolyzes mischarged Thr-tRNA(Val) in a tRNA-dependent manner. The sequence is that of Valine--tRNA ligase from Wolbachia sp. subsp. Brugia malayi (strain TRS).